The chain runs to 119 residues: MIVGHGIDLQEIEAITKAYERNQRFAERVLTEQELLLFKGISNPKRQMSFLTGRWAAKEAYSKALGTGIGKVNFHDIEILSDDKGAPLITKEPFNGKSFVSISHSGNYAQASVILEEEK.

The Mg(2+) site is built by Asp8 and Glu59.

Belongs to the P-Pant transferase superfamily. AcpS family. Requires Mg(2+) as cofactor.

It localises to the cytoplasm. It catalyses the reaction apo-[ACP] + CoA = holo-[ACP] + adenosine 3',5'-bisphosphate + H(+). Transfers the 4'-phosphopantetheine moiety from coenzyme A to a Ser of acyl-carrier-protein. This Streptococcus agalactiae serotype Ia (strain ATCC 27591 / A909 / CDC SS700) protein is Holo-[acyl-carrier-protein] synthase.